Consider the following 122-residue polypeptide: Glucagon-2 (122 aa).

The first 21 residues, methionine 1 to glutamine 21, serve as a signal peptide directing secretion. 2 propeptides span residues asparagine 83 to phenylalanine 86 and glutamate 122.

Belongs to the glucagon family.

The protein localises to the secreted. Promotes hydrolysis of glycogen and lipids, and raises the blood sugar level. The polypeptide is Glucagon-2 (gcg2) (Lophius americanus (American angler)).